Consider the following 527-residue polypeptide: Bacillolysin (527 aa).

Positions M1–A28 are cleaved as a signal peptide. Residues K29–H223 constitute a propeptide, activation peptide. Ca(2+)-binding residues include D276, D278, and D354. H358 provides a ligand contact to Zn(2+). Residue E359 is part of the active site. The Zn(2+) site is built by H362 and E382. Residues D393, N394, D396, E401, Y404, T405, and D411 each coordinate Ca(2+). H442 functions as the Proton donor in the catalytic mechanism.

The protein belongs to the peptidase M4 family. Ca(2+) is required as a cofactor. It depends on Zn(2+) as a cofactor.

It is found in the secreted. The catalysed reaction is Similar, but not identical, to that of thermolysin.. Functionally, extracellular zinc metalloprotease. This chain is Bacillolysin (npr), found in Brevibacillus brevis (Bacillus brevis).